A 186-amino-acid polypeptide reads, in one-letter code: Shikimate kinase (186 aa).

21–26 (GVGKTT) contributes to the ATP binding site. Thr25 provides a ligand contact to Mg(2+). Substrate contacts are provided by Asp43, Arg67, and Gly90. Arg129 provides a ligand contact to ATP. Arg147 serves as a coordination point for substrate.

Belongs to the shikimate kinase family. In terms of assembly, monomer. Requires Mg(2+) as cofactor.

The protein localises to the cytoplasm. The catalysed reaction is shikimate + ATP = 3-phosphoshikimate + ADP + H(+). It functions in the pathway metabolic intermediate biosynthesis; chorismate biosynthesis; chorismate from D-erythrose 4-phosphate and phosphoenolpyruvate: step 5/7. Its function is as follows. Catalyzes the specific phosphorylation of the 3-hydroxyl group of shikimic acid using ATP as a cosubstrate. This is Shikimate kinase from Bacillus subtilis (strain 168).